The following is a 190-amino-acid chain: Large ribosomal subunit protein uL10 (190 aa).

A disordered region spans residues 170-190 (AAGAPAEAAPVEAPAAETVDA).

Belongs to the universal ribosomal protein uL10 family. In terms of assembly, part of the ribosomal stalk of the 50S ribosomal subunit. The N-terminus interacts with L11 and the large rRNA to form the base of the stalk. The C-terminus forms an elongated spine to which L12 dimers bind in a sequential fashion forming a multimeric L10(L12)X complex.

Its function is as follows. Forms part of the ribosomal stalk, playing a central role in the interaction of the ribosome with GTP-bound translation factors. This Kineococcus radiotolerans (strain ATCC BAA-149 / DSM 14245 / SRS30216) protein is Large ribosomal subunit protein uL10.